The following is a 397-amino-acid chain: Dimethyladenosine transferase 2, mitochondrial (397 aa).

Residues 1–44 constitute a mitochondrion transit peptide; sequence MRGLAMRLPPRLALSVLAGRGPSCILGSGAATRKDWQERNRRSF. S-adenosyl-L-methionine-binding residues include Ile75, Glu124, and Asp150. Residues 329–330 form a DNA-binding region; the sequence is KR.

This sequence belongs to the class I-like SAM-binding methyltransferase superfamily. rRNA adenine N(6)-methyltransferase family. KsgA subfamily. In terms of assembly, homodimer. Component of the mitochondrial transcription initiation complex, composed at least of TFB2M, TFAM and POLRMT. In this complex TFAM recruits POLRMT to the promoter whereas TFB2M induces structural changes in POLRMT to enable promoter opening and trapping of the DNA non-template strand. Interacts with mitochondrial RNA polymerase POLRMT. Interacts with TFAM.

It localises to the mitochondrion. The catalysed reaction is adenosine in rRNA + S-adenosyl-L-methionine = N(6)-methyladenosine in rRNA + S-adenosyl-L-homocysteine + H(+). Its function is as follows. S-adenosyl-L-methionine-dependent rRNA methyltransferase which may methylate two specific adjacent adenosines in the loop of a conserved hairpin near the 3'-end of 12S mitochondrial rRNA. Component of the mitochondrial transcription initiation complex, composed at least of TFB2M, TFAM and POLRMT that is required for basal transcription of mitochondrial DNA. In this complex TFAM recruits POLRMT to a specific promoter whereas TFB2M induces structural changes in POLRMT to enable promoter opening and trapping of the DNA non-template strand. Stimulates transcription independently of the methyltransferase activity. This Rattus norvegicus (Rat) protein is Dimethyladenosine transferase 2, mitochondrial.